Reading from the N-terminus, the 135-residue chain is Small ribosomal subunit protein uS12 (135 aa).

A 3-methylthioaspartic acid modification is found at Asp89. Positions 101–135 are disordered; the sequence is SLDTSGVADRKQSRSKYGAKQPKAGAAAPVKGKRR. Residues 116-135 are compositionally biased toward low complexity; that stretch reads KYGAKQPKAGAAAPVKGKRR.

The protein belongs to the universal ribosomal protein uS12 family. As to quaternary structure, part of the 30S ribosomal subunit. Contacts proteins S8 and S17. May interact with IF1 in the 30S initiation complex.

With S4 and S5 plays an important role in translational accuracy. Its function is as follows. Interacts with and stabilizes bases of the 16S rRNA that are involved in tRNA selection in the A site and with the mRNA backbone. Located at the interface of the 30S and 50S subunits, it traverses the body of the 30S subunit contacting proteins on the other side and probably holding the rRNA structure together. The combined cluster of proteins S8, S12 and S17 appears to hold together the shoulder and platform of the 30S subunit. In Chlorobium phaeobacteroides (strain DSM 266 / SMG 266 / 2430), this protein is Small ribosomal subunit protein uS12.